Here is a 687-residue protein sequence, read N- to C-terminus: Chloride channel protein ClC-Kb (687 aa).

The Cytoplasmic portion of the chain corresponds to 1–50 (MEEIVGLREGSPRKPVPLQELWRPCPRIRRNIQGSLEWLKERLFRVGEDW). A run of 2 helical transmembrane segments spans residues 51–82 (YFLVALGVLMALISYAMNFAIGRVVRAHKWLY) and 91–111 (LRYLSWTVYPVALLSFSSGFS). The helical intramembrane region spans 116 to 127 (PSSGGSGIPEVK). S121 is a binding site for chloride. The next 2 membrane-spanning stretches (helical) occupy residues 141–160 (IKNFGAKVVGLSCTLATGST) and 161–180 (IFLGKLGPFVHLSVMIAAYL). N-linked (GlcNAc...) asparagine glycosylation is present at N193. An intramembrane region (helical) is located at residues 203–224 (AGAAVGVATVFAAPISGVLFSI). Residues 236 to 255 (YWRGFFAATCGAFMFHLLAV) traverse the membrane as a helical segment. The Ca(2+) site is built by E259, E261, D278, and E281. A run of 2 helical transmembrane segments spans residues 282–310 (IFFFVALGAICGILSCGYNYCQRTSLFFL) and 325–342 (PLYSALAAVVLASITYPP). An intramembrane region (helical) is located at residues 349 to 360 (ASRLSMSEYLET). The next 2 helical transmembrane spans lie at 400-420 (GTLVFFLVMKFWMLILATTIP) and 421-440 (IPAGYFLPIFVYGAAIGRLF). F426 is a binding site for chloride. Positions 464 to 496 (GAYALAGAAAFSGAVTHTLSTALLAFEVSGQIV) form an intramembrane region, helical. The chain crosses the membrane as a helical span at residues 500–520 (PVLMAVLAANAICQSYQPSFY). Topologically, residues 521 to 687 (DGTIIVKKLP…STLTNPPAPK (167 aa)) are cytoplasmic. CBS domains are found at residues 551–609 (MNCT…DSAS) and 626–687 (CPTQ…PAPK).

This sequence belongs to the chloride channel (TC 2.A.49) family. CLCNKB subfamily. As to quaternary structure, homodimer. Interacts with BSND. In terms of processing, N-glycosylated. Expressed predominantly in the kidney. Expressed in all segments of the nephron examined, including the S2 segment and the glomerulus.

It is found in the basolateral cell membrane. The catalysed reaction is chloride(in) = chloride(out). It catalyses the reaction iodide(out) = iodide(in). The enzyme catalyses nitrate(in) = nitrate(out). It carries out the reaction bromide(in) = bromide(out). Anion-selective channel permeable to small monovalent anions with ion selectivity for chloride &gt; bromide &gt; nitrate &gt; iodide. Forms a homodimeric channel where each subunit has its own ion conduction pathway. May conduct double-barreled currents controlled by two types of gates, two fast gates that control each subunit independently and a slow common gate that opens and shuts off both subunits simultaneously. Assembles with the regulatory subunit BSND/Barttin for sorting at the basolateral plasma membrane domain and functional switch to the ion conducting state. CLCNKB:BSND channels display mostly a linear current-voltage relationship controlled by common gate. Mediates chloride conductance along nephron segments, namely the thick ascending limb of Henle's loop, convoluted tubule and the collecting duct, contributing to the maintenance of systemic acid-base and electrolyte homeostasis. Conducts chloride currents in the stria vascularis of the inner ear to establish the endocochlear potential necessary for normal hearing. In Rattus norvegicus (Rat), this protein is Chloride channel protein ClC-Kb.